The chain runs to 227 residues: Lipoprotein-releasing system ATP-binding protein LolD (227 aa).

An ABC transporter domain is found at 8 to 226 (IEVTNLCKSF…VVHMADGRIT (219 aa)). An ATP-binding site is contributed by 44-51 (GASGAGKT).

Belongs to the ABC transporter superfamily. Lipoprotein translocase (TC 3.A.1.125) family. In terms of assembly, the complex is composed of two ATP-binding proteins (LolD) and two transmembrane proteins (LolC and LolE).

The protein localises to the cell inner membrane. Part of the ABC transporter complex LolCDE involved in the translocation of mature outer membrane-directed lipoproteins, from the inner membrane to the periplasmic chaperone, LolA. Responsible for the formation of the LolA-lipoprotein complex in an ATP-dependent manner. The polypeptide is Lipoprotein-releasing system ATP-binding protein LolD (Syntrophotalea carbinolica (strain DSM 2380 / NBRC 103641 / GraBd1) (Pelobacter carbinolicus)).